The primary structure comprises 364 residues: SVP1-like protein 2 (364 aa).

2 WD repeats span residues 173–213 (AHDS…KICE) and 218–257 (YQHT…NTIR).

This sequence belongs to the WD repeat PROPPIN family.

It localises to the vacuole membrane. It is found in the cytoplasmic vesicle membrane. The protein localises to the preautophagosomal structure membrane. Its function is as follows. Involved in mitochondrial or peroxisomal functions and amino acid signaling pathways. This Schizosaccharomyces pombe (strain 972 / ATCC 24843) (Fission yeast) protein is SVP1-like protein 2 (hsv2).